A 398-amino-acid chain; its full sequence is AT-rich interactive domain-containing protein 6 (398 aa).

Positions 25 to 87 (EPLEPENDHN…PKTEGENAKK (63 aa)) are disordered. The ARID domain maps to 106 to 197 (PVEQVAFLRE…ALLEYEKCLR (92 aa)). The segment at 213-236 (SSVEKEPSSHQGSGSGRARRDSAA) is disordered. The region spanning 305-398 (VGPVADWVKI…RLFIRVPFEQ (94 aa)) is the sHSP domain.

It belongs to the small heat shock protein (HSP20) family.

Its subcellular location is the nucleus. This Arabidopsis thaliana (Mouse-ear cress) protein is AT-rich interactive domain-containing protein 6 (ARID6).